A 327-amino-acid polypeptide reads, in one-letter code: MQQLTEIVEQALAAIEQATDLKVLDDIRVDYLGKKGQITDLMKLMGTLSAEEKPKFGQAVNDAKQSVQAKLGEQMELFKARELEAKLAAEQIDVTLPGRTLDNGGLHPVTRTIERIESFFGELGFTVKQGPEIEDDFHNFDALNISEHHPARADHDTFYFNPKVMLRTQTSGVQIRTMETEKPPLRIISPGRVYRNDYDMTHTPMFHQVEGLLVDENVNFAELKGILHDFLRNFFEEDLQVRFRPSYFPFTEPSAEVDVMGKNGKWLEVLGCGMVHPNVLRSVGIDPEKYSGFAFGMGVERLTMLRYGVNDLRAFFENDLRFLKQFK.

Glu252 contacts Mg(2+).

The protein belongs to the class-II aminoacyl-tRNA synthetase family. Phe-tRNA synthetase alpha subunit type 1 subfamily. As to quaternary structure, tetramer of two alpha and two beta subunits. Mg(2+) serves as cofactor.

The protein localises to the cytoplasm. It carries out the reaction tRNA(Phe) + L-phenylalanine + ATP = L-phenylalanyl-tRNA(Phe) + AMP + diphosphate + H(+). This chain is Phenylalanine--tRNA ligase alpha subunit, found in Shewanella amazonensis (strain ATCC BAA-1098 / SB2B).